The following is a 673-amino-acid chain: G-protein-signaling modulator 1 (673 aa).

The segment at 1 to 507 (MASPAPPAAE…DLLSKFQSSR (507 aa)) is mediates association with membranes. 9 TPR repeats span residues 28–61 (CLEL…GTED), 66–99 (SAIY…ARTI), 106–139 (AKAS…AQEQ), 146–178 (ARAL…PPDV), 180–199 (ETLH…VKEL), 206–239 (GRAY…AKEF), 246–279 (RRAY…SRQI), 286–319 (AQAC…AQEL), and 326–359 (GRAC…SQEI). Positions 361–485 (DRNGELTARM…VRVQVPRTGI (125 aa)) are interaction with STK11/LKB1. Position 410 is a phosphoserine (S410). Residue R418 is modified to Omega-N-methylarginine. Basic and acidic residues predominate over residues 420–439 (PLDREQNGETHHTGDWRGPS). Residues 420–477 (PLDREQNGETHHTGDWRGPSRDSLPLPMRSRKYQEGPDAIERRPREGSHSPLDSADVR) form a disordered region. Phosphoserine is present on residues S442, S467, S469, S490, and S491. The span at 451-467 (KYQEGPDAIERRPREGS) shows a compositional bias: basic and acidic residues. One can recognise a GoLoco 1 domain in the interval 493–515 (EECFFDLLSKFQSSRMDDQRCPL). The segment at 510 to 544 (DQRCPLEEGQAGAAEATAAPTLEERAAQPSVTASP) is disordered. Residues 516 to 530 (EEGQAGAAEATAAPT) are compositionally biased toward low complexity. A phosphoserine mark is found at S543 and S567. GoLoco domains lie at 546–568 (TEEF…RASV), 594–616 (GDEF…RCPP), and 628–650 (DEDF…RVDL). 2 disordered regions span residues 609–628 (IDDQ…TMPD) and 645–673 (EQRV…PGAS). S653 carries the phosphoserine modification.

This sequence belongs to the GPSM family. Interacts with INSC/inscuteable and FRMPD1. Interacts with GNAI1, GNAI2 and GNAI3 preferentially in their GDP-bound state. May also interact with GNAO1. Interacts with STK11/LKB1 and MACF1. Post-translationally, phosphorylation regulates interaction with G(i/o) alpha. In terms of tissue distribution, isoform 4 is specifically expressed in brain by neurons and also detected in testis, liver, kidney, heart and pancreas (at protein level). Highly expressed in cerebellum and subventricular zone-olfactory bulb system. Isoform 2 and isoform 3 are specifically expressed in heart and are also detected in brain.

It is found in the endoplasmic reticulum membrane. The protein resides in the golgi apparatus membrane. It localises to the cell membrane. The protein localises to the cytoplasm. Its subcellular location is the cytosol. In terms of biological role, guanine nucleotide dissociation inhibitor (GDI) which functions as a receptor-independent activator of heterotrimeric G-protein signaling. Keeps G(i/o) alpha subunit in its GDP-bound form thus uncoupling heterotrimeric G-proteins signaling from G protein-coupled receptors. Controls spindle orientation and asymmetric cell fate of cerebral cortical progenitors. May also be involved in macroautophagy in intestinal cells. May play a role in drug addiction. The chain is G-protein-signaling modulator 1 (Gpsm1) from Rattus norvegicus (Rat).